Here is a 188-residue protein sequence, read N- to C-terminus: GMP synthase [glutamine-hydrolyzing] subunit A (188 aa).

The Glutamine amidotransferase type-1 domain maps to 1–188 (MIVIMDNGGQ…RNFAKLCGEL (188 aa)). The Nucleophile role is filled by Cys78. Residues His165 and Glu167 contribute to the active site.

As to quaternary structure, heterodimer composed of a glutamine amidotransferase subunit (A) and a GMP-binding subunit (B).

The enzyme catalyses XMP + L-glutamine + ATP + H2O = GMP + L-glutamate + AMP + diphosphate + 2 H(+). It participates in purine metabolism; GMP biosynthesis; GMP from XMP (L-Gln route): step 1/1. In terms of biological role, catalyzes the synthesis of GMP from XMP. The polypeptide is GMP synthase [glutamine-hydrolyzing] subunit A (Pyrococcus abyssi (strain GE5 / Orsay)).